A 124-amino-acid chain; its full sequence is U33-theraphotoxin-Cg1a (124 aa).

Residues 1 to 17 (MKFAVAIAFTLLVCVFA) form the signal peptide. 5 disulfides stabilise this stretch: Cys26/Cys37, Cys31/Cys51, Cys36/Cys75, Cys61/Cys83, and Cys77/Cys94. Residues 93 to 108 (RCQEESGKSDKSKESQ) show a composition bias toward basic and acidic residues. The interval 93–124 (RCQEESGKSDKSKESQGSDESEESEESKESCG) is disordered. Acidic residues predominate over residues 109–118 (GSDESEESEE).

It belongs to the neurotoxin 32 family. In terms of tissue distribution, expressed by the venom gland.

Its subcellular location is the secreted. This chain is U33-theraphotoxin-Cg1a, found in Chilobrachys guangxiensis (Chinese earth tiger tarantula).